The chain runs to 402 residues: LIM/homeobox protein Lhx5 (402 aa).

LIM zinc-binding domains lie at 3 to 61 (VHCA…RRFG) and 62 to 125 (TKCA…SSSL). The span at 124–135 (SLKEGSLNSVSS) shows a compositional bias: low complexity. Disordered regions lie at residues 124-186 (SLKE…PRTT) and 298-402 (HGPP…AAVW). The segment covering 151–167 (DDPKETDNSTSSDKETA) has biased composition (basic and acidic residues). Positions 180–239 (RRGPRTTIKAKQLETLKAAFAATPKPTRHIREQLAQETGLNMRVIQVWFQNRRSKERRMK) form a DNA-binding region, homeobox. 2 stretches are compositionally biased toward low complexity: residues 300–311 (PPSQAQSPADSS) and 322–336 (PLGA…PHAA).

As to expression, expressed in fetal brain and in various regions of the adult central nervous system including the spinal cord, the thalamus, and the cerebellum.

The protein localises to the nucleus. In terms of biological role, plays an essential role in the regulation of neuronal differentiation and migration during development of the central nervous system. The polypeptide is LIM/homeobox protein Lhx5 (LHX5) (Homo sapiens (Human)).